The sequence spans 864 residues: Bifunctional uridylyltransferase/uridylyl-removing enzyme (864 aa).

The interval 1 to 328 (MLFPYFPLSE…QTNEPVQVRL (328 aa)) is uridylyltransferase. Positions 329 to 686 (LDKEFQCVNN…ISNRFSEGGT (358 aa)) are uridylyl-removing. One can recognise an HD domain in the interval 446 to 562 (VDEHIVRTLL…LHFAEAVQNN (117 aa)). 2 consecutive ACT domains span residues 687 to 766 (EIFV…TFRA) and 793 to 864 (EMEL…LEPK).

Belongs to the GlnD family. The cofactor is Mg(2+).

It catalyses the reaction [protein-PII]-L-tyrosine + UTP = [protein-PII]-uridylyl-L-tyrosine + diphosphate. The enzyme catalyses [protein-PII]-uridylyl-L-tyrosine + H2O = [protein-PII]-L-tyrosine + UMP + H(+). Its activity is regulated as follows. Uridylyltransferase (UTase) activity is inhibited by glutamine, while glutamine activates uridylyl-removing (UR) activity. Functionally, modifies, by uridylylation and deuridylylation, the PII regulatory proteins (GlnB and homologs), in response to the nitrogen status of the cell that GlnD senses through the glutamine level. Under low glutamine levels, catalyzes the conversion of the PII proteins and UTP to PII-UMP and PPi, while under higher glutamine levels, GlnD hydrolyzes PII-UMP to PII and UMP (deuridylylation). Thus, controls uridylylation state and activity of the PII proteins, and plays an important role in the regulation of nitrogen assimilation and metabolism. The sequence is that of Bifunctional uridylyltransferase/uridylyl-removing enzyme from Pasteurella multocida (strain Pm70).